The following is a 555-amino-acid chain: GPI-anchor transamidase component PIGS (555 aa).

The Cytoplasmic portion of the chain corresponds to 2 to 18; sequence AATGAAATDLEVVRGKR. 2 residues coordinate a cardiolipin: R15 and R18. A helical membrane pass occupies residues 19-39; it reads AALFFATVVIVLGLPLWWKTT. The Lumenal portion of the chain corresponds to 40-517; it reads ETYRAPLPYS…LHLLYFPDDQ (478 aa). 2 N-linked (GlcNAc...) asparagine glycosylation sites follow: N267 and N370. The helical transmembrane segment at 518-532 threads the bilayer; sequence KFAIYIPLFLPMAVP. Residues 533–555 are Cytoplasmic-facing; the sequence is ILLSLFKIFLETRKSWKKPEKTD.

It belongs to the PIGS family. In terms of assembly, heteropentamer. Part of the GPI-anchor transamidase complex, consisting of PIGK, PIGT, PIGS, PIGU and GAA1.

The protein localises to the endoplasmic reticulum membrane. It functions in the pathway glycolipid biosynthesis; glycosylphosphatidylinositol-anchor biosynthesis. Component of the glycosylphosphatidylinositol-anchor (GPI-anchor) transamidase (GPI-T) complex that catalyzes the formation of the linkage between a proprotein and a GPI-anchor and participates in GPI anchored protein biosynthesis. This is GPI-anchor transamidase component PIGS from Bos taurus (Bovine).